The chain runs to 119 residues: Large ribosomal subunit protein bL20 (119 aa).

Belongs to the bacterial ribosomal protein bL20 family.

In terms of biological role, binds directly to 23S ribosomal RNA and is necessary for the in vitro assembly process of the 50S ribosomal subunit. It is not involved in the protein synthesizing functions of that subunit. The sequence is that of Large ribosomal subunit protein bL20 from Rhodopseudomonas palustris (strain BisB5).